Here is a 147-residue protein sequence, read N- to C-terminus: Hemoglobin subunit beta-1 (147 aa).

Residues 3–147 (EWTDKERSII…VVSALGKQYH (145 aa)) form the Globin domain. The heme b site is built by H64 and H93.

The protein belongs to the globin family. Heterotetramer of two alpha chains and two beta chains. Red blood cells.

Its function is as follows. Involved in oxygen transport from gills to the various peripheral tissues. This chain is Hemoglobin subunit beta-1 (hbb1), found in Pagothenia borchgrevinki (Bald rockcod).